Here is a 72-residue protein sequence, read N- to C-terminus: Putative ORF1 protein (72 aa).

The chain is Putative ORF1 protein (ORF1) from Leishmania RNA virus 1 - 1 (isolate Leishmania guyanensis) (LRV-1-1).